The primary structure comprises 209 residues: Large ribosomal subunit protein uL3 (209 aa).

Positions 117–142 (FQGPIKRHGQSRGPETHGSRYHRRPG) are disordered.

It belongs to the universal ribosomal protein uL3 family. Part of the 50S ribosomal subunit. Forms a cluster with proteins L14 and L19.

In terms of biological role, one of the primary rRNA binding proteins, it binds directly near the 3'-end of the 23S rRNA, where it nucleates assembly of the 50S subunit. This is Large ribosomal subunit protein uL3 from Clostridioides difficile (strain 630) (Peptoclostridium difficile).